Reading from the N-terminus, the 652-residue chain is Interferon-induced GTP-binding protein Mx1 (652 aa).

Residues 1 to 27 form a disordered region; that stretch reads MKERTSACRHGTPQKHPDTSEESQAME. The 274-residue stretch at 58–331 folds into the Dynamin-type G domain; it reads DLALPAIAVI…LTSHICKSLP (274 aa). The tract at residues 68-75 is G1 motif; sequence GDQSSGKS. 68–75 lines the GTP pocket; the sequence is GDQSSGKS. Residues 93–95 form a G2 motif region; sequence VTR. The interval 169-172 is G3 motif; it reads DLPG. GTP-binding positions include 169–173 and 238–241; these read DLPGI and TKPD. The segment at 238–241 is G4 motif; sequence TKPD. Positions 270–273 are G5 motif; that stretch reads KCRG. A bundle signaling element (BSE) region spans residues 332 to 357; it reads ILENQINVNHQIASEELQKYGADIPE. The tract at residues 357 to 526 is middle domain; sequence EDDSKRLSFL…HFQMEHIVYC (170 aa). Residues 358-622 are stalk; that stretch reads DDSKRLSFLM…TSKCNWFLTE (265 aa). One can recognise a GED domain in the interval 564 to 652; that stretch reads TTEMTQHLNA…AQRKLAKFSN (89 aa).

Belongs to the TRAFAC class dynamin-like GTPase superfamily. Dynamin/Fzo/YdjA family. In terms of assembly, homooligomer. Oligomerizes into multimeric filamentous or ring-like structures by virtue of its stalk domain. Oligomerization is critical for GTPase activity, protein stability, and recognition of viral target structures. Interacts with TRPC1, TRPC3, TRPC4, TRPC5, TRPC6 and TRPC7. Interacts with HSPA5. Interacts with TUBB/TUBB5. Interacts with DDX39A and DDX39B. In terms of processing, ISGylated.

The protein resides in the nucleus. Its subcellular location is the cytoplasm. It is found in the endoplasmic reticulum membrane. The protein localises to the perinuclear region. In terms of biological role, interferon-induced dynamin-like GTPase which has antiviral activity against influenza A virus, (IAV) and Thogoto virus (THOV). Inhibits IAV by interfering with the process of primary transcription, probably by affecting the viral polymerase function. This is Interferon-induced GTP-binding protein Mx1 (Mx1) from Rattus norvegicus (Rat).